The following is a 186-amino-acid chain: Protein SPMIP2 (186 aa).

A disordered region spans residues 163–186 (SSLPRASKPPKLPKLPKKEKKRKH). A compositionally biased stretch (basic residues) spans 176–186 (KLPKKEKKRKH).

In Homo sapiens (Human), this protein is Protein SPMIP2.